Consider the following 345-residue polypeptide: Heat-inducible transcription repressor HrcA (345 aa).

This sequence belongs to the HrcA family.

Negative regulator of class I heat shock genes (grpE-dnaK-dnaJ and groELS operons). Prevents heat-shock induction of these operons. The polypeptide is Heat-inducible transcription repressor HrcA (Lachnoclostridium phytofermentans (strain ATCC 700394 / DSM 18823 / ISDg) (Clostridium phytofermentans)).